The chain runs to 308 residues: Tyramine--L-glutamate ligase (308 aa).

Positions 89–291 (KSLLKSENID…LAELLIKNAN (203 aa)) constitute an ATP-grasp domain. 115-192 (TKIIESYPVK…QEFIDGENLS (78 aa)) is a binding site for ATP. Mg(2+) is bound by residues Asp252, Glu264, and Asn266. Positions 252, 264, and 266 each coordinate Mn(2+).

Mg(2+) serves as cofactor. Requires Mn(2+) as cofactor.

The enzyme catalyses tyramine + L-glutamate + ATP = gamma-L-glutamyltyramine + ADP + phosphate + H(+). Its pathway is cofactor biosynthesis; methanofuran biosynthesis. Catalyzes the formation of an amide bond between tyramine and the gamma carboxy group of L-glutamate. The enzyme also accepts phenylethylamine in vitro. The polypeptide is Tyramine--L-glutamate ligase (mfnD) (Methanocaldococcus jannaschii (strain ATCC 43067 / DSM 2661 / JAL-1 / JCM 10045 / NBRC 100440) (Methanococcus jannaschii)).